The primary structure comprises 463 residues: Chromosomal replication initiator protein DnaA (463 aa).

A domain I, interacts with DnaA modulators region spans residues 1-83 (MNTNQIILTD…LQLFQHYNNT (83 aa)). The tract at residues 83–124 (TIKSIDIITKELPGTTQTVIELPTKTFADIGSSELNSENIFS) is domain II. Residues 125–343 (TLDVRFTFDN…GALNKVIAHS (219 aa)) form a domain III, AAA+ region region. The ATP site is built by Gly-171, Gly-173, Lys-174, and Thr-175. Residues 344 to 463 (NFTLKEITLE…INLLMKILQH (120 aa)) are domain IV, binds dsDNA.

Belongs to the DnaA family. In terms of assembly, oligomerizes as a right-handed, spiral filament on DNA at oriC.

The protein resides in the cytoplasm. Its function is as follows. Plays an essential role in the initiation and regulation of chromosomal replication. ATP-DnaA binds to the origin of replication (oriC) to initiate formation of the DNA replication initiation complex once per cell cycle. Binds the DnaA box (a 9 base pair repeat at the origin) and separates the double-stranded (ds)DNA. Forms a right-handed helical filament on oriC DNA; dsDNA binds to the exterior of the filament while single-stranded (ss)DNA is stabiized in the filament's interior. The ATP-DnaA-oriC complex binds and stabilizes one strand of the AT-rich DNA unwinding element (DUE), permitting loading of DNA polymerase. After initiation quickly degrades to an ADP-DnaA complex that is not apt for DNA replication. Binds acidic phospholipids. The protein is Chromosomal replication initiator protein DnaA of Rickettsia akari (strain Hartford).